A 527-amino-acid chain; its full sequence is Eukaryotic translation initiation factor 3 subunit D (527 aa).

The tract at residues 100–136 is disordered; sequence QQNKRGGSNAGGRGGRGGMRGGRFGSNNKYWNDRRQR. Gly residues predominate over residues 107–123; sequence SNAGGRGGRGGMRGGRF. The segment at 264–277 is RNA gate; sequence SEHLTVNENLTAHH. A disordered region spans residues 503 to 527; it reads DQIEEETQEEEEEEQSKGWVEESRE. Positions 504-516 are enriched in acidic residues; sequence QIEEETQEEEEEE. Residues 517–527 show a composition bias toward basic and acidic residues; it reads QSKGWVEESRE.

This sequence belongs to the eIF-3 subunit D family. Component of the eukaryotic translation initiation factor 3 (eIF-3) complex.

It is found in the cytoplasm. In terms of biological role, mRNA cap-binding component of the eukaryotic translation initiation factor 3 (eIF-3) complex, which is involved in protein synthesis of a specialized repertoire of mRNAs and, together with other initiation factors, stimulates binding of mRNA and methionyl-tRNAi to the 40S ribosome. The eIF-3 complex specifically targets and initiates translation of a subset of mRNAs involved in cell proliferation. In the eIF-3 complex, eif3d specifically recognizes and binds the 7-methylguanosine cap of a subset of mRNAs. The chain is Eukaryotic translation initiation factor 3 subunit D (eif3d) from Dictyostelium discoideum (Social amoeba).